A 317-amino-acid chain; its full sequence is 4-hydroxy-3-methylbut-2-enyl diphosphate reductase (317 aa).

Cys12 contacts [4Fe-4S] cluster. His41 and His74 together coordinate (2E)-4-hydroxy-3-methylbut-2-enyl diphosphate. Dimethylallyl diphosphate contacts are provided by His41 and His74. Residues His41 and His74 each contribute to the isopentenyl diphosphate site. Position 97 (Cys97) interacts with [4Fe-4S] cluster. (2E)-4-hydroxy-3-methylbut-2-enyl diphosphate is bound at residue His125. His125 provides a ligand contact to dimethylallyl diphosphate. His125 serves as a coordination point for isopentenyl diphosphate. Catalysis depends on Glu127, which acts as the Proton donor. Position 168 (Thr168) interacts with (2E)-4-hydroxy-3-methylbut-2-enyl diphosphate. Cys198 is a [4Fe-4S] cluster binding site. (2E)-4-hydroxy-3-methylbut-2-enyl diphosphate contacts are provided by Ser226, Ser227, Asn228, and Ser270. Residues Ser226, Ser227, Asn228, and Ser270 each coordinate dimethylallyl diphosphate. Residues Ser226, Ser227, Asn228, and Ser270 each coordinate isopentenyl diphosphate.

Belongs to the IspH family. Homodimer. It depends on [4Fe-4S] cluster as a cofactor.

It carries out the reaction isopentenyl diphosphate + 2 oxidized [2Fe-2S]-[ferredoxin] + H2O = (2E)-4-hydroxy-3-methylbut-2-enyl diphosphate + 2 reduced [2Fe-2S]-[ferredoxin] + 2 H(+). The catalysed reaction is dimethylallyl diphosphate + 2 oxidized [2Fe-2S]-[ferredoxin] + H2O = (2E)-4-hydroxy-3-methylbut-2-enyl diphosphate + 2 reduced [2Fe-2S]-[ferredoxin] + 2 H(+). The protein operates within isoprenoid biosynthesis; dimethylallyl diphosphate biosynthesis; dimethylallyl diphosphate from (2E)-4-hydroxy-3-methylbutenyl diphosphate: step 1/1. It participates in isoprenoid biosynthesis; isopentenyl diphosphate biosynthesis via DXP pathway; isopentenyl diphosphate from 1-deoxy-D-xylulose 5-phosphate: step 6/6. Catalyzes the conversion of 1-hydroxy-2-methyl-2-(E)-butenyl 4-diphosphate (HMBPP) into a mixture of isopentenyl diphosphate (IPP) and dimethylallyl diphosphate (DMAPP). Acts in the terminal step of the DOXP/MEP pathway for isoprenoid precursor biosynthesis. The polypeptide is 4-hydroxy-3-methylbut-2-enyl diphosphate reductase (Yersinia pseudotuberculosis serotype IB (strain PB1/+)).